The sequence spans 114 residues: UPF0757 protein YmgG (114 aa).

It belongs to the UPF0757 family.

This is UPF0757 protein YmgG from Edwardsiella ictaluri (strain 93-146).